The primary structure comprises 136 residues: 6,7-dimethyl-8-ribityllumazine synthase (136 aa).

Residues F11, 43–45 (VYD), and 67–69 (CVI) contribute to the 5-amino-6-(D-ribitylamino)uracil site. 72-73 (DT) is a (2S)-2-hydroxy-3-oxobutyl phosphate binding site. H75 acts as the Proton donor in catalysis. L100 is a 5-amino-6-(D-ribitylamino)uracil binding site. Position 115 (R115) interacts with (2S)-2-hydroxy-3-oxobutyl phosphate.

Belongs to the DMRL synthase family. Forms an icosahedral capsid composed of 60 subunits, arranged as a dodecamer of pentamers.

It carries out the reaction (2S)-2-hydroxy-3-oxobutyl phosphate + 5-amino-6-(D-ribitylamino)uracil = 6,7-dimethyl-8-(1-D-ribityl)lumazine + phosphate + 2 H2O + H(+). It participates in cofactor biosynthesis; riboflavin biosynthesis; riboflavin from 2-hydroxy-3-oxobutyl phosphate and 5-amino-6-(D-ribitylamino)uracil: step 1/2. Its function is as follows. Catalyzes the formation of 6,7-dimethyl-8-ribityllumazine by condensation of 5-amino-6-(D-ribitylamino)uracil with 3,4-dihydroxy-2-butanone 4-phosphate. This is the penultimate step in the biosynthesis of riboflavin. This chain is 6,7-dimethyl-8-ribityllumazine synthase, found in Methanococcus aeolicus (strain ATCC BAA-1280 / DSM 17508 / OCM 812 / Nankai-3).